A 264-amino-acid chain; its full sequence is Protein Saci_1508 (264 aa).

This sequence belongs to the CinA family.

The chain is Protein Saci_1508 from Sulfolobus acidocaldarius (strain ATCC 33909 / DSM 639 / JCM 8929 / NBRC 15157 / NCIMB 11770).